Reading from the N-terminus, the 1203-residue chain is Protein patched homolog 2 (1203 aa).

Over 1–57 (MTRSPPLRELPPSYTPPARTAAPQILAGSLKAPLWLRAYFQGLLFSLGCGIQRHCGK) the chain is Cytoplasmic. Residues 58 to 78 (VLFLGLLAFGALALGLRMAII) traverse the membrane as a helical segment. Residues 79–392 (ETNLEQLWVE…LDDILHAFSE (314 aa)) lie on the Extracellular side of the membrane. Asparagine 370 is a glycosylation site (N-linked (GlcNAc...) asparagine). Residues 393–413 (VSAARVVGGYLLMLAYACVTM) traverse the membrane as a helical segment. The SSD domain maps to 394-552 (SAARVVGGYL…MLVFPAILSL (159 aa)). Topologically, residues 414–428 (LRWDCAQSQGSVGLA) are cytoplasmic. The helical transmembrane segment at 429–449 (GVLLVALAVASGLGLCALLGI) threads the bilayer. The Extracellular portion of the chain corresponds to 450–457 (TFNAATTQ). A helical transmembrane segment spans residues 458–478 (VLPFLALGIGVDDVFLLAHAF). Residues 479–501 (TEALPGTPLQERMGECLQRTGTS) lie on the Cytoplasmic side of the membrane. A helical membrane pass occupies residues 502-522 (VVLTSINNMAAFLMAALVPIP). Over 523 to 531 (ALRAFSLQA) the chain is Extracellular. Residues 532–552 (AIVVGCTFVAVMLVFPAILSL) form a helical membrane-spanning segment. Residues 553–686 (DLRRRHCQRL…APLLLQSHAK (134 aa)) lie on the Cytoplasmic side of the membrane. A helical membrane pass occupies residues 687-707 (AIVLVLFGALLGLSLYGATLV). At 708–963 (QDGLALTDVV…WEQYLGLRRC (256 aa)) the chain is on the extracellular side. Asparagine 812 carries N-linked (GlcNAc...) asparagine glycosylation. The chain crosses the membrane as a helical span at residues 964–984 (FLLAVCILLVCTFLVCALLLL). At 985–991 (NPWTAGL) the chain is on the cytoplasmic side. A helical transmembrane segment spans residues 992–1012 (IVLVLAMMTVELFGIMGFLGI). Position 1013 (lysine 1013) is a topological domain, extracellular. A helical membrane pass occupies residues 1014 to 1034 (LSAIPVVILVASVGIGVEFTV). The Cytoplasmic segment spans residues 1035–1064 (HVALGFLTTQGSRNLRAAHALEHTFAPVTD). Residues 1065-1085 (GAISTLLGLLMLAGSHFDFIV) traverse the membrane as a helical segment. At 1086-1093 (RYFFAALT) the chain is on the extracellular side. The helical transmembrane segment at 1094–1114 (VLTLLGLLHGLVLLPVLLSIL) threads the bilayer. The Cytoplasmic segment spans residues 1115 to 1203 (GPPPEVIQMY…SSRGPGPATG (89 aa)). Residues 1171-1203 (GAYIHPAPDEPPWSPAATSSGNLSSRGPGPATG) are disordered. Residues 1186 to 1195 (AATSSGNLSS) are compositionally biased toward polar residues.

This sequence belongs to the patched family.

Its subcellular location is the membrane. Functionally, plays a role in the control of cellular growth. May have a role in epidermal development. May act as a receptor for Sonic hedgehog (SHH). The chain is Protein patched homolog 2 (PTCH2) from Homo sapiens (Human).